A 419-amino-acid polypeptide reads, in one-letter code: UDP-N-acetylglucosamine 1-carboxyvinyltransferase (419 aa).

22 to 23 (KN) is a binding site for phosphoenolpyruvate. Arg-91 lines the UDP-N-acetyl-alpha-D-glucosamine pocket. Cys-115 (proton donor) is an active-site residue. Residue Cys-115 is modified to 2-(S-cysteinyl)pyruvic acid O-phosphothioketal. Residues 120-124 (RPVDL), 160-163 (KVSV), Asp-305, and Ile-327 each bind UDP-N-acetyl-alpha-D-glucosamine.

It belongs to the EPSP synthase family. MurA subfamily.

Its subcellular location is the cytoplasm. The enzyme catalyses phosphoenolpyruvate + UDP-N-acetyl-alpha-D-glucosamine = UDP-N-acetyl-3-O-(1-carboxyvinyl)-alpha-D-glucosamine + phosphate. It functions in the pathway cell wall biogenesis; peptidoglycan biosynthesis. In terms of biological role, cell wall formation. Adds enolpyruvyl to UDP-N-acetylglucosamine. The protein is UDP-N-acetylglucosamine 1-carboxyvinyltransferase of Tolumonas auensis (strain DSM 9187 / NBRC 110442 / TA 4).